Reading from the N-terminus, the 353-residue chain is Holliday junction branch migration complex subunit RuvB (353 aa).

The interval 4 to 185 is large ATPase domain (RuvB-L); that stretch reads ADRLITATGG…FGIVQRLEFY (182 aa). ATP is bound by residues I24, R25, G66, K69, T70, T71, 132 to 134, R175, Y185, and R222; that span reads EDF. A Mg(2+)-binding site is contributed by T70. The segment at 186 to 256 is small ATPAse domain (RuvB-S); sequence NIADLSTIVS…TADKALNLLD (71 aa). The head domain (RuvB-H) stretch occupies residues 259 to 353; sequence EHGFDHQDRR…DDFGDEPVDL (95 aa). DNA is bound by residues R295, R314, and R319.

Belongs to the RuvB family. In terms of assembly, homohexamer. Forms an RuvA(8)-RuvB(12)-Holliday junction (HJ) complex. HJ DNA is sandwiched between 2 RuvA tetramers; dsDNA enters through RuvA and exits via RuvB. An RuvB hexamer assembles on each DNA strand where it exits the tetramer. Each RuvB hexamer is contacted by two RuvA subunits (via domain III) on 2 adjacent RuvB subunits; this complex drives branch migration. In the full resolvosome a probable DNA-RuvA(4)-RuvB(12)-RuvC(2) complex forms which resolves the HJ.

Its subcellular location is the cytoplasm. The catalysed reaction is ATP + H2O = ADP + phosphate + H(+). Its function is as follows. The RuvA-RuvB-RuvC complex processes Holliday junction (HJ) DNA during genetic recombination and DNA repair, while the RuvA-RuvB complex plays an important role in the rescue of blocked DNA replication forks via replication fork reversal (RFR). RuvA specifically binds to HJ cruciform DNA, conferring on it an open structure. The RuvB hexamer acts as an ATP-dependent pump, pulling dsDNA into and through the RuvAB complex. RuvB forms 2 homohexamers on either side of HJ DNA bound by 1 or 2 RuvA tetramers; 4 subunits per hexamer contact DNA at a time. Coordinated motions by a converter formed by DNA-disengaged RuvB subunits stimulates ATP hydrolysis and nucleotide exchange. Immobilization of the converter enables RuvB to convert the ATP-contained energy into a lever motion, pulling 2 nucleotides of DNA out of the RuvA tetramer per ATP hydrolyzed, thus driving DNA branch migration. The RuvB motors rotate together with the DNA substrate, which together with the progressing nucleotide cycle form the mechanistic basis for DNA recombination by continuous HJ branch migration. Branch migration allows RuvC to scan DNA until it finds its consensus sequence, where it cleaves and resolves cruciform DNA. This is Holliday junction branch migration complex subunit RuvB from Pseudomonas syringae pv. syringae (strain B728a).